Consider the following 493-residue polypeptide: Malonyl-CoA decarboxylase, mitochondrial (493 aa).

A mitochondrion-targeting transit peptide spans 1-39; the sequence is MRGFGPGLTARRLLPLRLPPRPPGPRLASGQAAGALERA. The tract at residues 40–190 is alpha-helical domain; sequence MDELLRRAVP…VLKGMLSEWF (151 aa). Lysine 59 bears the N6-acetyllysine mark. Lysine 168 is modified (N6-acetyllysine; alternate). At lysine 168 the chain carries N6-succinyllysine; alternate. Residues 191 to 493 are catalytic domain; sequence SSGFLNLERV…VAQFQKNSKL (303 aa). Lysine 211 bears the N6-acetyllysine mark. Lysine 222 bears the N6-succinyllysine mark. Residues 299-305 and serine 329 contribute to the malonyl-CoA site; that span reads QGVELGT. Serine 329 serves as the catalytic Proton acceptor. Residue lysine 389 is modified to N6-acetyllysine. Histidine 423 serves as a coordination point for malonyl-CoA. Histidine 423 serves as the catalytic Proton donor. Position 472 is an N6-acetyllysine (lysine 472). The short motif at 491 to 493 is the Microbody targeting signal element; the sequence is SKL.

Homotetramer. Dimer of dimers. The two subunits within a dimer display conformational differences suggesting that at any given moment, only one of the two subunits is competent for malonyl-CoA binding and catalytic activity. Under oxidizing conditions, can form disulfide-linked homotetramers (in vitro). Associates with the peroxisomal targeting signal receptor PEX5. Post-translationally, acetylation at Lys-472 activates malonyl-CoA decarboxylase activity. Deacetylation at Lys-472 by SIRT4 represses activity, leading to promote lipogenesis. In terms of processing, interchain disulfide bonds may form in peroxisomes (Potential). Interchain disulfide bonds are not expected to form in the reducing environment of the cytoplasm and mitochondria. Expressed in fibroblasts and hepatoblastoma cells (at protein level). Expressed strongly in heart, liver, skeletal muscle, kidney and pancreas. Expressed in myotubes. Expressed weakly in brain, placenta, spleen, thymus, testis, ovary and small intestine.

Its subcellular location is the cytoplasm. The protein localises to the mitochondrion matrix. It localises to the peroxisome. The protein resides in the peroxisome matrix. It catalyses the reaction malonyl-CoA + H(+) = acetyl-CoA + CO2. It participates in metabolic intermediate biosynthesis; acetyl-CoA biosynthesis; acetyl-CoA from malonyl-CoA: step 1/1. With respect to regulation, malonyl-CoA decarboxylase activity does not require any cofactors or divalent metal ions. Formation of interchain disulfide bonds leads to positive cooperativity between active sites and increases the affinity for malonyl-CoA and the catalytic efficiency (in vitro). Catalyzes the conversion of malonyl-CoA to acetyl-CoA. In the fatty acid biosynthesis MCD selectively removes malonyl-CoA and thus assures that methyl-malonyl-CoA is the only chain elongating substrate for fatty acid synthase and that fatty acids with multiple methyl side chains are produced. In peroxisomes it may be involved in degrading intraperoxisomal malonyl-CoA, which is generated by the peroxisomal beta-oxidation of odd chain-length dicarboxylic fatty acids. Plays a role in the metabolic balance between glucose and lipid oxidation in muscle independent of alterations in insulin signaling. May play a role in controlling the extent of ischemic injury by promoting glucose oxidation. The polypeptide is Malonyl-CoA decarboxylase, mitochondrial (Homo sapiens (Human)).